The following is a 79-amino-acid chain: D-alanyl carrier protein (79 aa).

In terms of domain architecture, Carrier spans 1–77 (MDTKQAVLDI…KIIAKVESLR (77 aa)). Residue Ser35 is modified to O-(pantetheine 4'-phosphoryl)serine.

The protein belongs to the DltC family. Post-translationally, 4'-phosphopantetheine is transferred from CoA to a specific serine of apo-DCP.

The protein resides in the cytoplasm. The protein operates within cell wall biogenesis; lipoteichoic acid biosynthesis. Its function is as follows. Carrier protein involved in the D-alanylation of lipoteichoic acid (LTA). The loading of thioester-linked D-alanine onto DltC is catalyzed by D-alanine--D-alanyl carrier protein ligase DltA. The DltC-carried D-alanyl group is further transferred to cell membrane phosphatidylglycerol (PG) by forming an ester bond, probably catalyzed by DltD. D-alanylation of LTA plays an important role in modulating the properties of the cell wall in Gram-positive bacteria, influencing the net charge of the cell wall. In Lactobacillus johnsonii (strain CNCM I-12250 / La1 / NCC 533), this protein is D-alanyl carrier protein.